We begin with the raw amino-acid sequence, 534 residues long: Blue-light-activated protein (534 aa).

The PAS domain occupies 20-93 (GKDIFFAAVE…QSIRDAIAQR (74 aa)). The residue at position 70 (C70) is an S-4a-FMN cysteine. In terms of domain architecture, PAC spans 94–148 (NDISAEIINYRKDGSSFWNALFISPVYNDAGDLIYFFASQLDISRRKDAEEALRQ). A Histidine kinase domain is found at 161-390 (GIAHDFNNLL…TLRLYFPVDE (230 aa)). H164 is modified (phosphohistidine; by autocatalysis). A Response regulatory domain is found at 411–527 (RILIVEDRPD…DLARKVRQVL (117 aa)). At D461 the chain carries 4-aspartylphosphate.

FMN binds covalently to cysteine after exposure to blue light and this bond is spontaneously broken in the dark.

It carries out the reaction ATP + protein L-histidine = ADP + protein N-phospho-L-histidine.. Its function is as follows. Photosensitive kinase and response regulator that is involved in increased bacterial virulence upon exposure to light. In Pseudomonas syringae pv. tomato (strain ATCC BAA-871 / DC3000), this protein is Blue-light-activated protein.